Here is a 585-residue protein sequence, read N- to C-terminus: Aspartate--tRNA(Asp/Asn) ligase (585 aa).

Residue Glu173 participates in L-aspartate binding. The aspartate stretch occupies residues 197-200; sequence QLFK. Arg219 is an L-aspartate binding site. ATP-binding positions include 219–221 and Gln228; that span reads RDE. His447 provides a ligand contact to L-aspartate. An ATP-binding site is contributed by Glu477. Residue Arg484 coordinates L-aspartate. An ATP-binding site is contributed by 529–532; sequence GFDR.

The protein belongs to the class-II aminoacyl-tRNA synthetase family. Type 1 subfamily. Homodimer.

The protein localises to the cytoplasm. The enzyme catalyses tRNA(Asx) + L-aspartate + ATP = L-aspartyl-tRNA(Asx) + AMP + diphosphate. In terms of biological role, aspartyl-tRNA synthetase with relaxed tRNA specificity since it is able to aspartylate not only its cognate tRNA(Asp) but also tRNA(Asn). Reaction proceeds in two steps: L-aspartate is first activated by ATP to form Asp-AMP and then transferred to the acceptor end of tRNA(Asp/Asn). The chain is Aspartate--tRNA(Asp/Asn) ligase from Campylobacter concisus (strain 13826).